A 379-amino-acid chain; its full sequence is Flagellin A (379 aa).

Coiled-coil stretches lie at residues 104-129 and 314-341; these read NSAS…IAET and QNRL…IKDT.

This sequence belongs to the bacterial flagellin family. As to quaternary structure, heteromer of multiple flagellin subunits including FlaA, FlaB, FlaC, FlaD and FlaE.

The protein resides in the secreted. It is found in the bacterial flagellum. In terms of biological role, flagellin is the subunit protein which polymerizes to form the filaments of bacterial flagella. FlaA is required to form a core or scaffold into which the other flagellins are inserted to provide structural integrity. Essential for flagellar synthesis and motility; important for full virulence. The chain is Flagellin A (flaA) from Vibrio cholerae serotype O1 (strain ATCC 39541 / Classical Ogawa 395 / O395).